We begin with the raw amino-acid sequence, 181 residues long: uncharacterized protein (181 aa).

This is an uncharacterized protein from Enterobacteria phage T4 (Bacteriophage T4).